We begin with the raw amino-acid sequence, 135 residues long: ATP synthase epsilon chain (135 aa).

This sequence belongs to the ATPase epsilon chain family. As to quaternary structure, F-type ATPases have 2 components, CF(1) - the catalytic core - and CF(0) - the membrane proton channel. CF(1) has five subunits: alpha(3), beta(3), gamma(1), delta(1), epsilon(1). CF(0) has three main subunits: a, b and c.

The protein localises to the cell inner membrane. Produces ATP from ADP in the presence of a proton gradient across the membrane. This chain is ATP synthase epsilon chain, found in Brucella anthropi (strain ATCC 49188 / DSM 6882 / CCUG 24695 / JCM 21032 / LMG 3331 / NBRC 15819 / NCTC 12168 / Alc 37) (Ochrobactrum anthropi).